Here is a 103-residue protein sequence, read N- to C-terminus: Small ribosomal subunit protein uS10 (103 aa).

It belongs to the universal ribosomal protein uS10 family. Part of the 30S ribosomal subunit.

In terms of biological role, involved in the binding of tRNA to the ribosomes. In Bordetella avium (strain 197N), this protein is Small ribosomal subunit protein uS10.